A 267-amino-acid polypeptide reads, in one-letter code: Alpha-tubulin N-acetyltransferase (267 aa).

One can recognise an N-acetyltransferase domain in the interval 1–197 (MDFRAGLENV…NNFVVYSEFF (197 aa)). Residues 131–144 (FYIHESHQRKGYGK) and 167–176 (SMKMIQFLHK) each bind acetyl-CoA.

The protein belongs to the acetyltransferase ATAT1 family.

The catalysed reaction is L-lysyl-[alpha-tubulin] + acetyl-CoA = N(6)-acetyl-L-lysyl-[alpha-tubulin] + CoA + H(+). Specifically acetylates 'Lys-40' in alpha-tubulin on the lumenal side of microtubules. Promotes microtubule destabilization and accelerates microtubule dynamics; this activity may be independent of acetylation activity. Acetylates alpha-tubulin with a slow enzymatic rate, due to a catalytic site that is not optimized for acetyl transfer. Enters the microtubule through each end and diffuses quickly throughout the lumen of microtubules. Acetylates only long/old microtubules because of its slow acetylation rate since it does not have time to act on dynamically unstable microtubules before the enzyme is released. This Schistosoma japonicum (Blood fluke) protein is Alpha-tubulin N-acetyltransferase.